We begin with the raw amino-acid sequence, 750 residues long: Photosystem I P700 chlorophyll a apoprotein A1 (750 aa).

8 helical membrane-spanning segments follow: residues 70-93, 156-179, 195-219, 291-309, 346-369, 385-411, 433-455, and 531-549; these read VFSA…FHGA, LYCT…FHYH, LNHH…HVSL, IAHH…GHMY, WHAQ…HHMY, LSLF…IFMV, AIIS…LYIH, and FLVH…LILL. The [4Fe-4S] cluster site is built by Cys-573 and Cys-582. 2 consecutive transmembrane segments (helical) span residues 589–610 and 664–686; these read HVFL…HFSW and LSAY…MFLF. His-675 serves as a coordination point for chlorophyll a'. Chlorophyll a contacts are provided by Met-683 and Tyr-691. A phylloquinone-binding site is contributed by Trp-692. Residues 724–744 form a helical membrane-spanning segment; that stretch reads AVGVTHYLLGGIATTWAFFLA.

The protein belongs to the PsaA/PsaB family. As to quaternary structure, the PsaA/B heterodimer binds the P700 chlorophyll special pair and subsequent electron acceptors. PSI consists of a core antenna complex that captures photons, and an electron transfer chain that converts photonic excitation into a charge separation. The eukaryotic PSI reaction center is composed of at least 11 subunits. P700 is a chlorophyll a/chlorophyll a' dimer, A0 is one or more chlorophyll a, A1 is one or both phylloquinones and FX is a shared 4Fe-4S iron-sulfur center. serves as cofactor.

Its subcellular location is the plastid. The protein resides in the chloroplast thylakoid membrane. It catalyses the reaction reduced [plastocyanin] + hnu + oxidized [2Fe-2S]-[ferredoxin] = oxidized [plastocyanin] + reduced [2Fe-2S]-[ferredoxin]. PsaA and PsaB bind P700, the primary electron donor of photosystem I (PSI), as well as the electron acceptors A0, A1 and FX. PSI is a plastocyanin-ferredoxin oxidoreductase, converting photonic excitation into a charge separation, which transfers an electron from the donor P700 chlorophyll pair to the spectroscopically characterized acceptors A0, A1, FX, FA and FB in turn. Oxidized P700 is reduced on the lumenal side of the thylakoid membrane by plastocyanin. This chain is Photosystem I P700 chlorophyll a apoprotein A1, found in Vitis vinifera (Grape).